Consider the following 805-residue polypeptide: Mediator of RNA polymerase II transcription subunit 25 (805 aa).

Disordered stretches follow at residues 430–455 and 786–805; these read GSAQNTQNSAPSSFTSTAPSMSGQTV and SQSQGSSQGLPITPGGGFMN. 2 stretches are compositionally biased toward low complexity: residues 438–451 and 786–795; these read SAPSSFTSTAPSMS and SQSQGSSQGL.

Belongs to the Mediator complex subunit 25 family. In terms of assembly, interacts with MYC2 (via N-terminus). MED25 competes with JAZ7 for binding to MYC2.

Functionally, component of the Mediator complex, a coactivator involved in the regulated transcription of nearly all RNA polymerase II-dependent genes. Mediator functions as a bridge to convey information from gene-specific regulatory proteins to the basal RNA polymerase II transcription machinery. Mediator is recruited to promoters by direct interactions with regulatory proteins and serves as a scaffold for the assembly of a functional pre-initiation complex with RNA polymerase II and the general transcription factors. Plays a positive role in wound-induced activation of jasmonate-responsive genes whose promoters are targeted by MYC2. This Solanum lycopersicum (Tomato) protein is Mediator of RNA polymerase II transcription subunit 25.